The primary structure comprises 23 residues: Alyteserin-1a (23 aa).

At Asn-23 the chain carries Asparagine amide.

In terms of tissue distribution, expressed by the skin glands.

The protein localises to the secreted. The protein resides in the target cell membrane. Functionally, antibacterial peptide with amphipathic alpha-helical structure. Shows selective growth inhibitory activity against the Gram-negative bacteria E.coli (MIC=25 uM) Has a weak hemolytic activity against human erythrocytes (LC(50)&gt;100 uM). Is very weakly active against S.aureus (MIC=200 uM). The sequence is that of Alyteserin-1a from Alytes obstetricans (Common midwife toad).